The sequence spans 1047 residues: Cation efflux system protein CusA (1047 aa).

12 helical membrane-spanning segments follow: residues 14-34 (FLVL…IINT), 338-358 (LSGK…LFLW), 363-383 (ALVA…VMHF), 391-411 (MSLG…IVMI), 446-466 (VGPA…PIFT), 485-505 (AMAG…GYWI), 532-552 (VLHW…TVLW), 871-891 (KLKL…YLAF), 898-918 (LLII…LWWM), 928-948 (TGFI…LMYL), 985-1005 (AMTV…TGAG), and 1012-1032 (IAAP…FIIP).

The protein belongs to the resistance-nodulation-cell division (RND) (TC 2.A.6) family. As to quaternary structure, the cus efflux system is composed of CusA, CusB, CusC and CusF.

The protein localises to the cell inner membrane. Functionally, part of a cation efflux system that mediates resistance to copper and silver. This is Cation efflux system protein CusA (cusA) from Escherichia coli (strain K12).